Here is a 563-residue protein sequence, read N- to C-terminus: Pyruvate decarboxylase (563 aa).

D28 and H115 together coordinate pyruvate. Residues T390 and 413–415 (GSI) each bind thiamine diphosphate. D444 serves as a coordination point for Mg(2+). Thiamine diphosphate contacts are provided by residues 445–446 (GS) and 471–476 (NDGYTI). N471 and G473 together coordinate Mg(2+). Position 477 (E477) interacts with pyruvate.

The protein belongs to the TPP enzyme family. As to quaternary structure, homotetramer. It depends on Mg(2+) as a cofactor. Thiamine diphosphate serves as cofactor.

It carries out the reaction a 2-oxocarboxylate + H(+) = an aldehyde + CO2. The catalysed reaction is pyruvate + H(+) = acetaldehyde + CO2. In Kluyveromyces lactis (strain ATCC 8585 / CBS 2359 / DSM 70799 / NBRC 1267 / NRRL Y-1140 / WM37) (Yeast), this protein is Pyruvate decarboxylase (PDC1).